Consider the following 316-residue polypeptide: Glutathione synthetase (316 aa).

In terms of domain architecture, ATP-grasp spans 125–310 (KLFTAWFSDL…ITGMLMDAIE (186 aa)). 151 to 207 (WEKHSDIILKPLDGMGGASIFRVKEGDPNLGVIAETLTEHGTCYCMAQNYLPAIKDG) is an ATP binding site. Mg(2+) is bound by residues Glu-281 and Asn-283.

It belongs to the prokaryotic GSH synthase family. It depends on Mg(2+) as a cofactor. Mn(2+) is required as a cofactor.

The enzyme catalyses gamma-L-glutamyl-L-cysteine + glycine + ATP = glutathione + ADP + phosphate + H(+). The protein operates within sulfur metabolism; glutathione biosynthesis; glutathione from L-cysteine and L-glutamate: step 2/2. The polypeptide is Glutathione synthetase (Shigella flexneri).